The following is a 113-amino-acid chain: Type III endosome membrane protein TEMP (113 aa).

Residues 1 to 22 (MNETNKTLVGPSELPTASAVAP) are disordered. Topologically, residues 1–29 (MNETNKTLVGPSELPTASAVAPGPGTGAR) are extracellular. A glycan (N-linked (GlcNAc...) asparagine) is linked at asparagine 5. Residues 30-50 (AWPVLVGFVLGAVVLSLLIAL) traverse the membrane as a helical; Signal-anchor for type III membrane protein segment. The Cytoplasmic portion of the chain corresponds to 51 to 113 (AAKCHLCRRY…TEGSRDHFSL (63 aa)). The disordered stretch occupies residues 66–113 (HRPLPETGRGGRPQVAEDEDDDGFIEDNYIQPGTGELGTEGSRDHFSL). Over residues 81 to 90 (AEDEDDDGFI) the composition is skewed to acidic residues.

It localises to the membrane. It is found in the early endosome. The protein resides in the recycling endosome. The protein localises to the cell membrane. May be involved in membrane trafficking between endosomes and plasma membrane. In Homo sapiens (Human), this protein is Type III endosome membrane protein TEMP (C1orf210).